A 347-amino-acid chain; its full sequence is Holliday junction branch migration complex subunit RuvB (347 aa).

The segment at 1-186 (MKDENSINFL…FGITARFELY (186 aa)) is large ATPase domain (RuvB-L). ATP contacts are provided by residues Leu-25, Arg-26, Gly-67, Lys-70, Thr-71, Thr-72, 133-135 (EDY), Arg-176, Tyr-186, and Arg-223. Thr-71 contributes to the Mg(2+) binding site. Residues 187–257 (SEIELVEIIK…IVAIGLEMLR (71 aa)) form a small ATPAse domain (RuvB-S) region. The segment at 260–347 (GEGLDEQDRN…NLNENQRVSF (88 aa)) is head domain (RuvB-H). Residues Arg-315 and Arg-320 each contribute to the DNA site.

It belongs to the RuvB family. Homohexamer. Forms an RuvA(8)-RuvB(12)-Holliday junction (HJ) complex. HJ DNA is sandwiched between 2 RuvA tetramers; dsDNA enters through RuvA and exits via RuvB. An RuvB hexamer assembles on each DNA strand where it exits the tetramer. Each RuvB hexamer is contacted by two RuvA subunits (via domain III) on 2 adjacent RuvB subunits; this complex drives branch migration. In the full resolvosome a probable DNA-RuvA(4)-RuvB(12)-RuvC(2) complex forms which resolves the HJ.

It is found in the cytoplasm. The enzyme catalyses ATP + H2O = ADP + phosphate + H(+). The RuvA-RuvB-RuvC complex processes Holliday junction (HJ) DNA during genetic recombination and DNA repair, while the RuvA-RuvB complex plays an important role in the rescue of blocked DNA replication forks via replication fork reversal (RFR). RuvA specifically binds to HJ cruciform DNA, conferring on it an open structure. The RuvB hexamer acts as an ATP-dependent pump, pulling dsDNA into and through the RuvAB complex. RuvB forms 2 homohexamers on either side of HJ DNA bound by 1 or 2 RuvA tetramers; 4 subunits per hexamer contact DNA at a time. Coordinated motions by a converter formed by DNA-disengaged RuvB subunits stimulates ATP hydrolysis and nucleotide exchange. Immobilization of the converter enables RuvB to convert the ATP-contained energy into a lever motion, pulling 2 nucleotides of DNA out of the RuvA tetramer per ATP hydrolyzed, thus driving DNA branch migration. The RuvB motors rotate together with the DNA substrate, which together with the progressing nucleotide cycle form the mechanistic basis for DNA recombination by continuous HJ branch migration. Branch migration allows RuvC to scan DNA until it finds its consensus sequence, where it cleaves and resolves cruciform DNA. This Borreliella afzelii (strain PKo) (Borrelia afzelii) protein is Holliday junction branch migration complex subunit RuvB.